We begin with the raw amino-acid sequence, 368 residues long: Galanin receptor type 3 (368 aa).

Residues methionine 1–valine 20 lie on the Extracellular side of the membrane. Asparagine 6 is a glycosylation site (N-linked (GlcNAc...) asparagine). A helical transmembrane segment spans residues proline 21 to valine 41. Over leucine 42–threonine 57 the chain is Cytoplasmic. Residues aspartate 58–phenylalanine 78 traverse the membrane as a helical segment. Residues glutamine 79–lysine 96 are Extracellular-facing. Cysteine 95 and cysteine 172 form a disulfide bridge. A helical transmembrane segment spans residues alanine 97–valine 118. Residues aspartate 119–asparagine 138 are Cytoplasmic-facing. Residues alanine 139 to serine 159 form a helical membrane-spanning segment. Residues tyrosine 160–leucine 184 are Extracellular-facing. A helical membrane pass occupies residues aspartate 185–glycine 205. The Cytoplasmic segment spans residues arginine 206 to alanine 236. A helical transmembrane segment spans residues methionine 237–cysteine 257. The Extracellular portion of the chain corresponds to phenylalanine 258–tryptophan 259. The chain crosses the membrane as a helical span at residues tyrosine 260 to alanine 280. Residues tyrosine 281 to glutamate 368 are Cytoplasmic-facing. Cysteine 308 carries the S-palmitoyl cysteine lipid modification. Positions arginine 317–glutamate 368 are disordered.

This sequence belongs to the G-protein coupled receptor 1 family.

The protein localises to the cell membrane. Functionally, receptor for the hormone galanin. Receptor for the hormone spexin-1. The chain is Galanin receptor type 3 (GALR3) from Homo sapiens (Human).